Consider the following 249-residue polypeptide: Sugar fermentation stimulation protein homolog (249 aa).

The protein belongs to the SfsA family.

In Synechococcus sp. (strain RCC307), this protein is Sugar fermentation stimulation protein homolog.